Reading from the N-terminus, the 273-residue chain is Undecaprenyl-diphosphatase (273 aa).

The next 6 membrane-spanning stretches (helical) occupy residues 46 to 63, 83 to 103, 109 to 129, 184 to 204, 218 to 238, and 249 to 269; these read LFEV…CWEY, FVLN…LAGK, LFNS…ILWV, ATEF…AYDL, AFGI…RGLL, and FAWY…YGLV.

Belongs to the UppP family.

It is found in the cell inner membrane. The catalysed reaction is di-trans,octa-cis-undecaprenyl diphosphate + H2O = di-trans,octa-cis-undecaprenyl phosphate + phosphate + H(+). Catalyzes the dephosphorylation of undecaprenyl diphosphate (UPP). Confers resistance to bacitracin. The protein is Undecaprenyl-diphosphatase of Methylococcus capsulatus (strain ATCC 33009 / NCIMB 11132 / Bath).